The chain runs to 59 residues: Large ribosomal subunit protein bL32c (59 aa).

The tract at residues 37 to 59 (SRSFSSGNEHPKPKGFSGQQANK) is disordered.

It belongs to the bacterial ribosomal protein bL32 family.

It is found in the plastid. The protein localises to the chloroplast. In Saccharum hybrid (Sugarcane), this protein is Large ribosomal subunit protein bL32c.